The primary structure comprises 375 residues: Chaperone protein DnaJ (375 aa).

Residues 4–69 (DLYETLGVQK…QKRAAYDRYG (66 aa)) enclose the J domain. The segment at 133–211 (GKTAQIRVPT…CHGQGRVVEE (79 aa)) adopts a CR-type zinc-finger fold. Positions 146, 149, 163, 166, 185, 188, 199, and 202 each coordinate Zn(2+). 4 CXXCXGXG motif repeats span residues 146 to 153 (CDVCTGTG), 163 to 170 (CGTCQGTG), 185 to 192 (CPTCGGRG), and 199 to 206 (CTKCHGQG).

Belongs to the DnaJ family. Homodimer. It depends on Zn(2+) as a cofactor.

It localises to the cytoplasm. Functionally, participates actively in the response to hyperosmotic and heat shock by preventing the aggregation of stress-denatured proteins and by disaggregating proteins, also in an autonomous, DnaK-independent fashion. Unfolded proteins bind initially to DnaJ; upon interaction with the DnaJ-bound protein, DnaK hydrolyzes its bound ATP, resulting in the formation of a stable complex. GrpE releases ADP from DnaK; ATP binding to DnaK triggers the release of the substrate protein, thus completing the reaction cycle. Several rounds of ATP-dependent interactions between DnaJ, DnaK and GrpE are required for fully efficient folding. Also involved, together with DnaK and GrpE, in the DNA replication of plasmids through activation of initiation proteins. The protein is Chaperone protein DnaJ of Sinorhizobium medicae (strain WSM419) (Ensifer medicae).